Consider the following 122-residue polypeptide: Large ribosomal subunit protein uL14 (122 aa).

It belongs to the universal ribosomal protein uL14 family. As to quaternary structure, part of the 50S ribosomal subunit. Forms a cluster with proteins L3 and L19. In the 70S ribosome, L14 and L19 interact and together make contacts with the 16S rRNA in bridges B5 and B8.

Its function is as follows. Binds to 23S rRNA. Forms part of two intersubunit bridges in the 70S ribosome. The polypeptide is Large ribosomal subunit protein uL14 (Limosilactobacillus fermentum (strain NBRC 3956 / LMG 18251) (Lactobacillus fermentum)).